The primary structure comprises 240 residues: MPVGTEAIRKVDFLAGTGNRFVAEGKRQLFGEVGIDLFAGPTESLVLADETADPFTVATDLISQAGHGPDTPAVLITTCPKVGRETIEIVNKLLSATDLSTPDVAKVSWDAFGEVIIVDTLKELWELGDHYASEQVQVFTKDPRDALDKMSNYGALFLGENTCVSYGDKVIGKNHVLLTRTTARYTGGLWVGKYLKTCTYQEVTSPESSGKLGRLCGRAARPERFEAHARSGDLQANRHM.

Zn(2+) contacts are provided by glutamine 64 and histidine 67. The Proton acceptor role is filled by glutamate 134. 2 residues coordinate Zn(2+): aspartate 168 and histidine 228.

It belongs to the histidinol dehydrogenase family. Zn(2+) serves as cofactor.

The protein operates within secondary metabolite biosynthesis. Functionally, histidinol dehydrogenase homolog; part of the gene cluster that mediates the biosynthesis of oryzines, natural products with an unusual maleidride backbone. The two subunits of the fungal fatty acid synthase oryfasA and oryfasB probably form octenoic acid. This fatty acid is most likely activated by the acyl-CoA ligase oryP to give octenyl-CoA before the citrate synthase-like protein oryE catalyzes condensation with oxaloacetate to form tricarboxylic acid. The next steps of the pathways are conjectural, but a favorite possible route has been proposed, beginning with decarboxylation and concomitant dehydration by the decarboxylase oryM, followed by tautomerization, which may lead to the production of a diene intermediate. Reduction of this diene intermediate could give the known metabolite piliformic acid. On the pathway to oryzine B and oryzine A, however, hydroxylation of the diene by the alpha-ketoglutarate-dependent dioxygenase oryG and lactonisation by the lactonohydrolases oryH or oryL could give oryzine B directly. Finally, enoyl reduction by the dehydrogenase oryD would then convert oryzine B into oryzine A. The chain is Histidinol dehydrogenase homolog oryD from Aspergillus oryzae (strain ATCC 42149 / RIB 40) (Yellow koji mold).